A 470-amino-acid polypeptide reads, in one-letter code: Tubulin gamma chain (470 aa).

Residue 144–150 (AGGTGSG) participates in GTP binding.

The protein belongs to the tubulin family.

The protein localises to the cytoplasm. The protein resides in the cytoskeleton. It is found in the microtubule organizing center. Its subcellular location is the spindle pole body. Tubulin is the major constituent of microtubules. The gamma chain is found at microtubule organizing centers (MTOC) such as the spindle poles or the centrosome, suggesting that it is involved in the minus-end nucleation of microtubule assembly. The protein is Tubulin gamma chain (TUB4) of Eremothecium gossypii (strain ATCC 10895 / CBS 109.51 / FGSC 9923 / NRRL Y-1056) (Yeast).